A 123-amino-acid chain; its full sequence is Integration host factor subunit alpha (123 aa).

The tract at residues 97 to 123 (NANGSAPSMSSSASAVDDDKSESASRT) is disordered. Residues 98–111 (ANGSAPSMSSSASA) are compositionally biased toward low complexity. A compositionally biased stretch (basic and acidic residues) spans 113–123 (DDDKSESASRT).

It belongs to the bacterial histone-like protein family. Heterodimer of an alpha and a beta chain.

This protein is one of the two subunits of integration host factor, a specific DNA-binding protein that functions in genetic recombination as well as in transcriptional and translational control. The protein is Integration host factor subunit alpha of Rhodopseudomonas palustris (strain BisB5).